Reading from the N-terminus, the 90-residue chain is U7-theraphotoxin-Hhn1h (90 aa).

The signal sequence occupies residues 1-19 (MKTAIFTVVLALAVFAVLS). Residues 20-50 (FGWEANEKALSEEFTELIHEKEAASETEARE) constitute a propeptide that is removed on maturation. Intrachain disulfides connect Cys51–Cys65, Cys58–Cys70, and Cys64–Cys81.

This sequence belongs to the neurotoxin 10 (Hwtx-1) family. 13 (Hntx-13) subfamily. As to expression, expressed by the venom gland.

It localises to the secreted. In terms of biological role, ion channel inhibitor. This chain is U7-theraphotoxin-Hhn1h, found in Cyriopagopus hainanus (Chinese bird spider).